Consider the following 135-residue polypeptide: Ribonuclease P protein component (135 aa).

The protein belongs to the RnpA family. Consists of a catalytic RNA component (M1 or rnpB) and a protein subunit.

The enzyme catalyses Endonucleolytic cleavage of RNA, removing 5'-extranucleotides from tRNA precursor.. Its function is as follows. RNaseP catalyzes the removal of the 5'-leader sequence from pre-tRNA to produce the mature 5'-terminus. It can also cleave other RNA substrates such as 4.5S RNA. The protein component plays an auxiliary but essential role in vivo by binding to the 5'-leader sequence and broadening the substrate specificity of the ribozyme. In Saccharophagus degradans (strain 2-40 / ATCC 43961 / DSM 17024), this protein is Ribonuclease P protein component.